The chain runs to 250 residues: Agamous-like MADS-box protein AGL8 homolog (250 aa).

Residues 3–57 (RGRVQLKRIENKINRQVTFSKRRSGLLKKAHEISVLCDAEVGLIVFSTKGKLFEY) form the MADS-box domain. Positions 88–178 (PGSWTLEHAK…SKKVKEREKE (91 aa)) constitute a K-box domain.

In terms of tissue distribution, abundant in vegetative organs.

Its subcellular location is the nucleus. Probable transcription factor. The protein is Agamous-like MADS-box protein AGL8 homolog of Solanum tuberosum (Potato).